We begin with the raw amino-acid sequence, 975 residues long: Glycine dehydrogenase (decarboxylating) (975 aa).

Lys-723 bears the N6-(pyridoxal phosphate)lysine mark.

This sequence belongs to the GcvP family. As to quaternary structure, the glycine cleavage system is composed of four proteins: P, T, L and H. Pyridoxal 5'-phosphate serves as cofactor.

The catalysed reaction is N(6)-[(R)-lipoyl]-L-lysyl-[glycine-cleavage complex H protein] + glycine + H(+) = N(6)-[(R)-S(8)-aminomethyldihydrolipoyl]-L-lysyl-[glycine-cleavage complex H protein] + CO2. Functionally, the glycine cleavage system catalyzes the degradation of glycine. The P protein binds the alpha-amino group of glycine through its pyridoxal phosphate cofactor; CO(2) is released and the remaining methylamine moiety is then transferred to the lipoamide cofactor of the H protein. In Burkholderia ambifaria (strain MC40-6), this protein is Glycine dehydrogenase (decarboxylating).